Reading from the N-terminus, the 1669-residue chain is Dystrophin, isoform B (1669 aa).

The span at 1 to 11 shows a compositional bias: pro residues; the sequence is MTAKPPPPIPP. 5 disordered regions span residues 1-28, 43-243, 327-356, 389-417, and 481-508; these read MTAK…LAPE, RGQQ…SEDA, RAQA…RSTI, GGGG…MPLS, and SGAL…NSSG. A compositionally biased stretch (polar residues) spans 53–62; it reads SQEQHATNTL. A compositionally biased stretch (pro residues) spans 118–131; sequence GLPPTMRQPPPLPR. Residues 132-147 are compositionally biased toward low complexity; the sequence is KPASTQSSAQNSAQSS. The segment covering 153-166 has biased composition (basic and acidic residues); that stretch reads KFKDKPPPPPEKHS. Low complexity-rich tracts occupy residues 328–347 and 396–405; these read AQAQ…SNSQ and STGNAVANSG. Over residues 485–500 the composition is skewed to basic and acidic residues; the sequence is SREELRMRRRSSHDET. Spectrin repeat units follow at residues 541–643, 650–747, 754–883, and 890–990; these read QRFE…KQLH, QSFD…NRLE, NALL…HRLD, and RQFQ…KVLC. Residues 827–851 form a disordered region; sequence VSDTSDTEANHDSDSRYMSAEEQSR. The interval 994-1024 is disordered; that stretch reads AQQTHENGDDGRTTSNSGTIGPLPNLGQSVK. In terms of domain architecture, WW spans 1021–1054; the sequence is QSVKPPWERATTAANVPYYIDHERETTHWDHPEM. Residues 1279–1335 form a ZZ-type zinc finger; that stretch reads KHQAKCNICKEYPIVGFRYRCLKCFNFDMCQKCFFFGRNAKNHKLTHPMHEYCTTTT. C1284, C1287, C1299, C1302, C1308, C1311, H1321, and H1325 together coordinate Zn(2+). The residue at position 1379 (S1379) is a Phosphoserine. 2 disordered regions span residues 1488–1516 and 1559–1669; these read EQSG…GEQG and DEPN…ELQK. 2 stretches are compositionally biased toward polar residues: residues 1497 to 1509 and 1580 to 1611; these read NGMQ…MTGL and ALNS…QQNG. Acidic residues predominate over residues 1630–1641; sequence QELESINDDLED. Residues 1642–1660 are compositionally biased toward low complexity; the sequence is SSSSNTTNTTTTTTTTATT.

Component of the dystrophin associated protein complex (DAPC). Interacts with Dg, via the Dg WW domain binding sites. Expressed in neuronally derived tissues, mainly the CNS and the brain of stage 16 embryos. Lower level expression is seen in the sensory organs. Expression is absent from the musculature. In larvae, expression is predominant throughout the neuropil and brain and in the eye antennal disks.

It is found in the cell membrane. It localises to the sarcolemma. Its subcellular location is the cytoplasm. The protein localises to the cytoskeleton. Required for the maintenance of appropriate synaptic retrograde communication and the stabilization of muscle cell architecture or physiology. May play a role in anchoring the cytoskeleton to the plasma membrane. This Drosophila melanogaster (Fruit fly) protein is Dystrophin, isoform B (Dys).